Here is a 356-residue protein sequence, read N- to C-terminus: Chitin elicitor-binding protein (356 aa).

A signal peptide spans 1-28; sequence MASLTAALATPAAAALLLLVLLAAPASA. N30 carries N-linked (GlcNAc...) asparagine glycosylation. 4 disulfide bridges follow: C33-C100, C41-C164, C98-C162, and C100-C164. 50 to 51 contributes to the chitin binding site; the sequence is PN. N63 and N89 each carry an N-linked (GlcNAc...) asparagine glycan. 2 consecutive LysM domains span residues 111–158 and 175–219; these read PIYV…TLWI and LAYS…ILDV. Residues 117–123, N142, 145–152, T155, and G182 each bind chitin; these read PQDGLDA and PDPNKINV. A glycan (N-linked (GlcNAc...) asparagine) is linked at N151. The N-linked (GlcNAc...) asparagine glycan is linked to N184. Chitin-binding positions include S186 and 211–213; that span reads LQM. 2 cysteine pairs are disulfide-bonded: C224/C257 and C252/C274. N-linked (GlcNAc...) asparagine glycans are attached at residues N265, N281, N290, N306, and N319. A helical transmembrane segment spans residues 336–356; it reads RSMWSMSVISFHMVLIIICFL.

Forms homooligomer. Interacts with CERK1. Binds to chitin oligosaccharide elicitor. Interacts with LYP4 and LYP6. Post-translationally, N-glycosylated. In terms of tissue distribution, expressed in seedlings, roots, shoots, stems and flowers.

The protein localises to the cell membrane. Functionally, chitin elicitor-binding protein involved in the perception and transduction of chitin oligosaccharide elicitor signal for defense responses. The protein is Chitin elicitor-binding protein of Oryza sativa subsp. japonica (Rice).